The chain runs to 394 residues: MLWKLLRLFIIIKLIQLAIIYFSPCQFDTSSELIIQNLSSTSSSKSYYNVIITTILNKLIVWDSVYFNDLFINPIQFEHQFVFCPGWIQLIKLLNIKNYYTAQLTSILISNLCHFASVITLYYLTNEMDMKFGLVSGLLMIISPAGVFLTGNYSENLSNLLTLLMFLTYYKSINFNDVKQPSNKSITNILGYIISGIFCAINFTVRANGLLLGVIYVFDLYHFIQNKSSSQIILSIITGSILFMTFLMTNIYHYIKFCPGREWCNNTFPSLFQFAQHHYWNVGFLKYWTPNNIPNFILVLPVLIFNIYSLGYMYQELPKNRKLLPLIVINGLIVVGGTFFWNIQILNRITSFSPLIYWTLAYNLKKPWAKYAIGYCIVWNFVQTGLFAAFLPPA.

9 helical membrane passes run 2–22 (LWKL…IIYF), 47–67 (YYNV…SVYF), 104–124 (LTSI…LYYL), 132–152 (FGLV…LTGN), 185–205 (SITN…NFTV), 232–252 (IILS…TNIY), 293–313 (IPNF…LGYM), 323–343 (LLPL…FWNI), and 371–391 (YAIG…AAFL).

It belongs to the PIGV family.

It localises to the endoplasmic reticulum membrane. It participates in glycolipid biosynthesis; glycosylphosphatidylinositol-anchor biosynthesis. Its function is as follows. Mannosyltransferase involved in glycosylphosphatidylinositol-anchor biosynthesis. Transfers the second mannose to the glycosylphosphatidylinositol during GPI precursor assembly. The protein is GPI mannosyltransferase 2 (GPI18) of Candida albicans (strain SC5314 / ATCC MYA-2876) (Yeast).